The primary structure comprises 127 residues: Putative defensin-like protein 180 (127 aa).

The signal sequence occupies residues 1-26 (MERITSLVFFASFLIIFVSGVNQTRA). Intrachain disulfides connect C29/C70, C36/C55, C39/C64, C43/C66, C81/C127, C92/C112, C97/C121, and C101/C123.

This sequence belongs to the DEFL family.

It is found in the secreted. This Arabidopsis thaliana (Mouse-ear cress) protein is Putative defensin-like protein 180 (LCR58).